Reading from the N-terminus, the 157-residue chain is Phosphopantetheine adenylyltransferase (157 aa).

Ser-8 provides a ligand contact to substrate. ATP contacts are provided by residues 8–9 and His-16; that span reads SF. Residues Lys-40, Thr-72, and Arg-86 each contribute to the substrate site. ATP is bound by residues 87–89, Glu-97, and 122–128; these read GLR and HSFLSSS.

This sequence belongs to the bacterial CoaD family. As to quaternary structure, homohexamer. The cofactor is Mg(2+).

The protein localises to the cytoplasm. It carries out the reaction (R)-4'-phosphopantetheine + ATP + H(+) = 3'-dephospho-CoA + diphosphate. The protein operates within cofactor biosynthesis; coenzyme A biosynthesis; CoA from (R)-pantothenate: step 4/5. Functionally, reversibly transfers an adenylyl group from ATP to 4'-phosphopantetheine, yielding dephospho-CoA (dPCoA) and pyrophosphate. The protein is Phosphopantetheine adenylyltransferase of Prochlorococcus marinus (strain MIT 9313).